The sequence spans 624 residues: Aeromonas extracellular serine protease (624 aa).

Residues 1–24 form the signal peptide; sequence MKQTSLALAITALLSTLPSALVQA. Cysteine 28 and cysteine 48 form a disulfide bridge. Residue asparagine 53 participates in Ca(2+) binding. The Peptidase S8 domain occupies 59–421; that stretch reads QWYLLNSGQD…GKVRDVKGLE (363 aa). The Charge relay system role is filled by aspartate 102. Residue aspartate 111 coordinates Ca(2+). The interval 116-140 is disordered; the sequence is VRPGSKNVVTGSDDPTPTDPDTAHG. Histidine 139 acts as the Charge relay system in catalysis. Ca(2+) contacts are provided by valine 150, asparagine 152, isoleucine 154, threonine 156, aspartate 321, leucine 322, glycine 324, methionine 327, asparagine 330, and cysteine 350. An intrachain disulfide couples cysteine 325 to cysteine 350. Serine 360 (charge relay system) is an active-site residue. A P/Homo B domain is found at 456 to 622; that stretch reads LPPLVQLPWQ…SLRVLGHDAN (167 aa). Aspartate 478, aspartate 512, aspartate 577, alanine 579, asparagine 602, and asparagine 603 together coordinate Ca(2+).

This sequence belongs to the peptidase S8 family. Furin subfamily. In terms of assembly, forms a complex with the chaperone ORF2 in the periplasm. After translocation of the ASP-ORF2 complex from the periplasm to the extracellular space, the complex is dissociated in a pH-dependent manner. The cofactor is Ca(2+).

It is found in the periplasm. It localises to the secreted. The enzyme catalyses Cleavage of -Lys-Lys-|-Xaa and -Lys-Arg-|-Xaa bonds.. Its activity is regulated as follows. Folding, maturation and production of the active form of the protease by the cell requires a protein (ORF2), encoded just downstream of asp, which acts as a chaperone. Formation of a complex with ORF2 in the periplasm also inactivates the protease activity and likely protects ASP from intrinsic proteases. In vitro, protease activity is inhibited by human alpha-2-macroglobulin, suggesting that this inhibitor can impede ASP virulence activities in A.sobria infection sites. However, slow ASP inhibition by alpha-2-macroglobulin in plasma may indicate insufficient ASP control in vivo. Activity is inhibited by serine protease inhibitors such as 4-(2-aminoethyl)-benzenesulfonyl fluoride (AEBSF) and diisopropyl fluorophosphate (DFP). Not inhibited by metallo-protease inhibitors and cysteine protease inhibitors. The treatment with reagents to modify sulfhydryl group do not reduce the activity. Exhibits serine protease activity. Preferentially cleaves the peptide bond following two basic residues, one of which is Lys, but does not recognize the bond following a single basic residue. Probable potent virulence factor that cleaves various host plasma proteins, including prekallikrein, prothrombin and fibrinogen. ASP induces vascular leakage and reduction in blood pressure by activating the host plasma kallikrein/kinin system. It affects the host coagulation system during infection through activation of prothrombin to alpha-thrombin and degradation of fibrinogen, which impairs plasma clottability. It also hydrolyzes the complement component C5, releasing the C5a anaphylatoxin, which causes the formation of pus and edema. In addition, degrades its external chaperone ORF2 after the secretion of the ASP-ORF2 complex. The protein is Aeromonas extracellular serine protease of Aeromonas sobria.